Reading from the N-terminus, the 200-residue chain is Small ribosomal subunit protein uS4c (200 aa).

Residues 88-148 (IRLDNTIFNL…PKSYYIFKLC (61 aa)) enclose the S4 RNA-binding domain.

It belongs to the universal ribosomal protein uS4 family. Part of the 30S ribosomal subunit.

It is found in the plastid. Its subcellular location is the apicoplast. Its function is as follows. One of the primary rRNA binding proteins, it binds directly to 16S rRNA where it nucleates assembly of the body of the 30S subunit. This Eimeria tenella (Coccidian parasite) protein is Small ribosomal subunit protein uS4c (rps4).